Reading from the N-terminus, the 130-residue chain is Ribonuclease P protein component 2 (130 aa).

It belongs to the eukaryotic/archaeal RNase P protein component 2 family. As to quaternary structure, consists of a catalytic RNA component and at least 5 protein subunits.

Its subcellular location is the cytoplasm. The enzyme catalyses Endonucleolytic cleavage of RNA, removing 5'-extranucleotides from tRNA precursor.. Functionally, part of ribonuclease P, a protein complex that generates mature tRNA molecules by cleaving their 5'-ends. The sequence is that of Ribonuclease P protein component 2 from Methanococcus maripaludis (strain DSM 14266 / JCM 13030 / NBRC 101832 / S2 / LL).